The primary structure comprises 141 residues: ATP synthase epsilon chain (141 aa).

It belongs to the ATPase epsilon chain family. In terms of assembly, F-type ATPases have 2 components, CF(1) - the catalytic core - and CF(0) - the membrane proton channel. CF(1) has five subunits: alpha(3), beta(3), gamma(1), delta(1), epsilon(1). CF(0) has three main subunits: a, b and c.

It is found in the cell inner membrane. Functionally, produces ATP from ADP in the presence of a proton gradient across the membrane. The chain is ATP synthase epsilon chain from Aromatoleum aromaticum (strain DSM 19018 / LMG 30748 / EbN1) (Azoarcus sp. (strain EbN1)).